The chain runs to 177 residues: Hypoxanthine phosphoribosyltransferase (177 aa).

Residues Arg43 and Gly44 each coordinate diphosphate. GMP is bound at residue Glu99. Glu99 is a binding site for IMP. Residues Glu99 and Asp100 each contribute to the Mg(2+) site. The active-site Proton acceptor is Asp103. Residues 103-108 (DSGKTL), Lys131, and Asp159 each bind GMP. IMP-binding positions include 103-108 (DSGKTL) and Lys131. Residue Arg165 coordinates diphosphate.

The protein belongs to the purine/pyrimidine phosphoribosyltransferase family. In terms of assembly, homotetramer. The cofactor is Mg(2+).

Its subcellular location is the cytoplasm. It carries out the reaction IMP + diphosphate = hypoxanthine + 5-phospho-alpha-D-ribose 1-diphosphate. The enzyme catalyses GMP + diphosphate = guanine + 5-phospho-alpha-D-ribose 1-diphosphate. Its pathway is purine metabolism; IMP biosynthesis via salvage pathway; IMP from hypoxanthine: step 1/1. In terms of biological role, purine salvage pathway enzyme which catalyzes the transfer of the ribosyl-5-phosphate group from 5-phospho-alpha-D-ribose 1-diphosphate (PRPP) to the N9 position of hypoxanthine to yield IMP (inosine 5'-monophosphate). To a lesser extent, can also act on guanine leading to GMP, but shows a highly less efficient activity with xanthine. The polypeptide is Hypoxanthine phosphoribosyltransferase (hpt) (Buchnera aphidicola subsp. Schizaphis graminum (strain Sg)).